We begin with the raw amino-acid sequence, 245 residues long: Sugar fermentation stimulation protein homolog (245 aa).

The protein belongs to the SfsA family.

The protein is Sugar fermentation stimulation protein homolog of Rhodospirillum rubrum (strain ATCC 11170 / ATH 1.1.1 / DSM 467 / LMG 4362 / NCIMB 8255 / S1).